The primary structure comprises 362 residues: tRNA/tmRNA (uracil-C(5))-methyltransferase (362 aa).

Positions 186, 214, 219, 235, and 295 each coordinate S-adenosyl-L-methionine. The active-site Nucleophile is the Cys320. Catalysis depends on Glu354, which acts as the Proton acceptor.

Belongs to the class I-like SAM-binding methyltransferase superfamily. RNA M5U methyltransferase family. TrmA subfamily.

The catalysed reaction is uridine(54) in tRNA + S-adenosyl-L-methionine = 5-methyluridine(54) in tRNA + S-adenosyl-L-homocysteine + H(+). It catalyses the reaction uridine(341) in tmRNA + S-adenosyl-L-methionine = 5-methyluridine(341) in tmRNA + S-adenosyl-L-homocysteine + H(+). In terms of biological role, dual-specificity methyltransferase that catalyzes the formation of 5-methyluridine at position 54 (m5U54) in all tRNAs, and that of position 341 (m5U341) in tmRNA (transfer-mRNA). The chain is tRNA/tmRNA (uracil-C(5))-methyltransferase from Ectopseudomonas mendocina (strain ymp) (Pseudomonas mendocina).